The primary structure comprises 249 residues: EID1-like F-box protein 2 (249 aa).

Positions 16-68 (HCTKGHLSEEVLFLMVQHLNWNPNVIATLSCVCKWFDDLAKRLLWKEFCRARA) constitute an F-box domain.

The chain is EID1-like F-box protein 2 (EDL2) from Arabidopsis thaliana (Mouse-ear cress).